Here is a 450-residue protein sequence, read N- to C-terminus: Putative MYST-like histone acetyltransferase 1 (450 aa).

Positions 63 to 122 (LEVGTRVMCRWRDQKLHPVKVIERRKSSTSSSPADYEYYVHYTEFNRRLDEWVKLEQLDL) constitute a Tudor-knot domain. In terms of domain architecture, MYST-type HAT spans 174–445 (TKVKNIAKIE…VDVSKLIWTP (272 aa)). The C2HC MYST-type zinc finger occupies 207-232 (LFFCEFCLNFMKRKEQLQRHMKKCDL). Position 274 is an N6-acetyllysine; by autocatalysis (K274). Acetyl-CoA is bound by residues 317–319 (ILT) and 324–330 (QRKGYGK). E350 (proton donor/acceptor) is an active-site residue. S354 lines the acetyl-CoA pocket.

This sequence belongs to the MYST (SAS/MOZ) family. Post-translationally, autoacetylation at Lys-274 is required for proper function.

The protein resides in the nucleus. The enzyme catalyses L-lysyl-[protein] + acetyl-CoA = N(6)-acetyl-L-lysyl-[protein] + CoA + H(+). Functionally, histone acetyltransferase which may be involved in transcriptional activation. In Oryza sativa subsp. japonica (Rice), this protein is Putative MYST-like histone acetyltransferase 1.